Consider the following 327-residue polypeptide: GMP reductase (327 aa).

Residue C176 is the Thioimidate intermediate of the active site. An NADP(+)-binding site is contributed by 205–228 (IIADGGIRTHGDIAKSIRFGATMV).

Belongs to the IMPDH/GMPR family. GuaC type 2 subfamily.

The enzyme catalyses IMP + NH4(+) + NADP(+) = GMP + NADPH + 2 H(+). Its function is as follows. Catalyzes the irreversible NADPH-dependent deamination of GMP to IMP. It functions in the conversion of nucleobase, nucleoside and nucleotide derivatives of G to A nucleotides, and in maintaining the intracellular balance of A and G nucleotides. The protein is GMP reductase of Streptococcus equi subsp. equi (strain 4047).